Here is a 526-residue protein sequence, read N- to C-terminus: MDIYAVAVGRVGVELDAAQLERVRATHLRVQGWGMEKYPMYGVNTGFGELINVIIPPQFKSDLQHNLLRSHAAGGGEPFPDEVVRAIMTVRINCLMKGYSGISPEALQLLATMLNRGIHPVIPMQGSLGASGDLAPLSHMALPLIGDGHVRKNGVTRPTMEVFQEEGLTPLKLGFKEGLALVNGTSAMTGAASLALYRARHLLRLSLLASADIVQAMNASTRPFSHTGNALKNHPGQVVIARLMRDLTQGTGLMRDHQDIMRAISERTSHSNDVEETEIYLQNAYSLRCMPQVLGVVLETLQMCQRFIEEEANSVNDNPVILDTPAETYHGANFHGQYVAMACDYLSIAVAEMGVLAERQLNRLLDPHINKPLPGFLAHAKTGLFCGFEGGQYLATSIASENLDLAAPSSIKSIPSNGQNQDIVSMGLIAARKTLALCENVGTILSVLMAALNQASHFTEAAKYSAPIRSIHEKLGKVAPRYEDERPMSTVIAQVRGVLLQEQGLALAQSLVNLDLTPDLSLEPRA.

Tyr41 (proton donor/acceptor) is an active-site residue. His71 provides a ligand contact to substrate. A cross-link (5-imidazolinone (Ala-Gly)) is located at residues 130–132 (ASG). Ser131 carries the post-translational modification 2,3-didehydroalanine (Ser). Residues Asn183 and Arg288 each contribute to the substrate site.

The protein belongs to the TAL/TAM family. In terms of assembly, homotetramer; dimer of dimers. Post-translationally, contains an active site 4-methylidene-imidazol-5-one (MIO), which is formed autocatalytically by cyclization and dehydration of residues Ala-Ser-Gly.

The enzyme catalyses L-tyrosine = 3-amino-3-(4-hydroxyphenyl)propanoate. It catalyses the reaction L-tyrosine = (E)-4-coumarate + NH4(+). Its function is as follows. Has aminomutase and, to a much lesser extent, ammonia-lyase activity. Primarily, catalyzes the rearrangement of L-tyrosine to S-beta-tyrosine, which is probably incorporated into secondary metabolite myxovalargin. The aminomutase activity exclusively produces S-beta-tyrosine. This Myxococcus fulvus protein is Tyrosine 2,3-aminomutase.